The primary structure comprises 182 residues: Lipid A acyltransferase PagP (182 aa).

An N-terminal signal peptide occupies residues 1–21 (MTQYFRALAFFLLLVPATAMA). A lipid anchor (N-palmitoyl cysteine) is attached at Cys-22. Cys-22 carries S-diacylglycerol cysteine lipidation. Active-site residues include His-55, Asp-98, and Ser-99.

This sequence belongs to the lipid A palmitoyltransferase family. As to quaternary structure, homodimer.

It is found in the cell outer membrane. The catalysed reaction is a lipid A + a 1,2-diacyl-sn-glycero-3-phosphocholine = a hepta-acyl lipid A + a 2-acyl-sn-glycero-3-phosphocholine. It carries out the reaction a lipid IVA + a 1,2-diacyl-sn-glycero-3-phosphocholine = a lipid IVB + a 2-acyl-sn-glycero-3-phosphocholine. It catalyses the reaction a lipid IIA + a 1,2-diacyl-sn-glycero-3-phosphocholine = a lipid IIB + a 2-acyl-sn-glycero-3-phosphocholine. Transfers a fatty acid residue from the sn-1 position of a phospholipid to the N-linked hydroxyfatty acid chain on the proximal unit of lipid A or its precursors. Required for resistance to cationic antimicrobial peptides (CAMPs). Modifications of lipid A with an acyl chain to evade host immune defenses by resisting antibody-mediated complement lysis during respiratory infection. The chain is Lipid A acyltransferase PagP from Bordetella bronchiseptica (strain ATCC BAA-588 / NCTC 13252 / RB50) (Alcaligenes bronchisepticus).